A 156-amino-acid chain; its full sequence is Aspartate 1-decarboxylase (156 aa).

Ser-26 acts as the Schiff-base intermediate with substrate; via pyruvic acid in catalysis. Ser-26 carries the pyruvic acid (Ser) modification. Thr-58 lines the substrate pocket. Tyr-59 serves as the catalytic Proton donor. 74–76 contacts substrate; the sequence is GGA.

This sequence belongs to the PanD family. Heterooctamer of four alpha and four beta subunits. Pyruvate serves as cofactor. Post-translationally, is synthesized initially as an inactive proenzyme, which is activated by self-cleavage at a specific serine bond to produce a beta-subunit with a hydroxyl group at its C-terminus and an alpha-subunit with a pyruvoyl group at its N-terminus.

The protein resides in the cytoplasm. It carries out the reaction L-aspartate + H(+) = beta-alanine + CO2. It functions in the pathway cofactor biosynthesis; (R)-pantothenate biosynthesis; beta-alanine from L-aspartate: step 1/1. In terms of biological role, catalyzes the pyruvoyl-dependent decarboxylation of aspartate to produce beta-alanine. This Gloeothece citriformis (strain PCC 7424) (Cyanothece sp. (strain PCC 7424)) protein is Aspartate 1-decarboxylase.